A 183-amino-acid polypeptide reads, in one-letter code: Nucleosome assembly protein 1-like 5 (183 aa).

The disordered stretch occupies residues 1–71 (MADSENQGPA…APKPKNDFIE (71 aa)). Composition is skewed to low complexity over residues 7 to 21 (QGPA…AAEA) and 28 to 49 (AEGG…SAAG). A coiled-coil region spans residues 81-107 (VLALKKLQKRCDKIEAKFDKEFQALEK). A compositionally biased stretch (acidic residues) spans 135 to 161 (EGEEEEEEEYEDDEEEGEEEEEEEEAA). The segment at 135–183 (EGEEEEEEEYEDDEEEGEEEEEEEEAAAEAAAGAKHDDAHAEMPDDAKK) is disordered. Residues 168 to 183 (AKHDDAHAEMPDDAKK) show a composition bias toward basic and acidic residues.

The protein belongs to the nucleosome assembly protein (NAP) family.

Its subcellular location is the nucleus. In Pongo abelii (Sumatran orangutan), this protein is Nucleosome assembly protein 1-like 5 (NAP1L5).